Here is a 252-residue protein sequence, read N- to C-terminus: Small ribosomal subunit protein eS4 (252 aa).

Residues 43–106 (LPLLILVRDM…NKYYRVIPVP (64 aa)) enclose the S4 RNA-binding domain.

This sequence belongs to the eukaryotic ribosomal protein eS4 family.

This Desulfurococcus amylolyticus (strain DSM 18924 / JCM 16383 / VKM B-2413 / 1221n) (Desulfurococcus kamchatkensis) protein is Small ribosomal subunit protein eS4.